Consider the following 340-residue polypeptide: MSFIDEAKIYLKAGNGGDGCSSFRREKFIEFGGPDGGNGGNGGNIIFYTSHHINTLLYFRYKQHIKAENGNPGSSKKKSGSSGKDVIIKVPIGTQLYDEDGMLITDLNEENQKFIAAHGGKGGIGNANYKTSTNRAPRHFTFGKRGEEKHIILKLKIISDVGIIGLPNAGKSSFLASCTNSKTKIADYPFTTLEPHLGVAFIDNTELVLADIPGLIPGAHLGHGIGDKFLKHIERCSILLHIIDCTLDNIIESYECIRKELSFYNKELSNKTEFIVLNKSDLLDKKEINQKKQILSNHTKKEIFISSIKNNRYPILSTLIKQIHKKYTNTKPHIYDPFNI.

The region spanning 1-158 (MSFIDEAKIY…KHIILKLKII (158 aa)) is the Obg domain. Positions 159–325 (SDVGIIGLPN…LSTLIKQIHK (167 aa)) constitute an OBG-type G domain. GTP contacts are provided by residues 165–172 (GLPNAGKS), 190–194 (FTTLE), 211–214 (DIPG), 278–281 (NKSD), and 306–308 (SSI). Mg(2+) contacts are provided by Ser172 and Thr192.

The protein belongs to the TRAFAC class OBG-HflX-like GTPase superfamily. OBG GTPase family. As to quaternary structure, monomer. It depends on Mg(2+) as a cofactor.

The protein localises to the cytoplasm. An essential GTPase which binds GTP, GDP and possibly (p)ppGpp with moderate affinity, with high nucleotide exchange rates and a fairly low GTP hydrolysis rate. Plays a role in control of the cell cycle, stress response, ribosome biogenesis and in those bacteria that undergo differentiation, in morphogenesis control. The protein is GTPase Obg of Ehrlichia canis (strain Jake).